The sequence spans 382 residues: Norsolorinic acid reductase B (382 aa).

Asp64 provides a ligand contact to NADP(+). The active-site Proton donor is Tyr69. Substrate is bound at residue His143. Residues 173–174 (SD), Gln199, 228–238 (GVLNQGRFRTE), and 302–310 (RKVDHLTGV) each bind NADP(+).

It belongs to the aldo/keto reductase family. Aldo/keto reductase 2 subfamily.

Its pathway is mycotoxin biosynthesis; aflatoxin biosynthesis. Norsolorinic acid reductase; part of the gene cluster that mediates the biosynthesis of aflatoxins, a group of polyketide-derived furanocoumarins, and part of the most toxic and carcinogenic compounds among the known mycotoxins. The four major aflatoxins produced by A.parasiticus are aflatoxin B1 (AFB1), aflatoxin B2 (AFB2), aflatoxin G1 (AFG1) and aflatoxin G2 (AFG2). Within the aflatoxin pathway, the norsolorinic acid reductase aflE may play a role in the conversion of norsolorinic acid (NOR) to averantin (AVN). The biosynthesis of aflatoxins begins with the norsolorinic acid synthase aflC that combines a hexanoyl starter unit produced by the fatty acid synthase aflA/aflB and 7 malonyl-CoA extender units to synthesize the precursor NOR. The second step is the conversion of NOR to averantin and requires the norsolorinic acid ketoreductase aflD, which catalyzes the dehydration of norsolorinic acid to form (1'S)-averantin. The norsolorinic acid reductases aflE and aflF may also play a role in the conversion of NOR to AVN. The cytochrome P450 monooxygenase aflG then catalyzes the hydroxylation of AVN to 5'hydroxyaverantin (HAVN). The next step is performed by the 5'-hydroxyaverantin dehydrogenase aflH that transforms HAVN to 5'-oxoaverantin (OAVN) which is further converted to averufin (AVF) by aflK that plays a dual role in the pathway, as a 5'-oxoaverantin cyclase that mediates conversion of 5'-oxoaverantin, as well as a versicolorin B synthase in a later step in the pathway. The averufin oxidase aflI catalyzes the conversion of AVF to versiconal hemiacetal acetate (VHA). VHA is then the substrate for the versiconal hemiacetal acetate esterase aflJ to yield versiconal (VAL). Versicolorin B synthase aflK then converts VAL to versicolorin B (VERB) by closing the bisfuran ring of aflatoxin which is required for DNA-binding, thus giving to aflatoxin its activity as a mutagen. Then, the activity of the versicolorin B desaturase aflL leads to versicolorin A (VERA). A branch point starts from VERB since it can also be converted to dihydrodemethylsterigmatocystin (DMDHST), probably also by aflL, VERA being a precursor for aflatoxins B1 and G1, and DMDHST for aflatoxins B2 and G2. Next, the versicolorin reductase aflM and the cytochrome P450 monooxygenase aflN are involved in conversion of VERA to demethylsterigmatocystin (DMST). AflX and aflY seem also involved in this step, through probable aflX-mediated epoxide ring-opening step following versicolorin A oxidation and aflY-mediated Baeyer-Villiger oxidation required for the formation of the xanthone ring. The methyltransferase aflO then leads to the modification of DMST to sterigmatocystin (ST), and of DMDHST to dihydrosterigmatocystin (DHST). Both ST and DHST are then substrates of the O-methyltransferase aflP to yield O-methylsterigmatocystin (OMST) and dihydro-O-methylsterigmatocystin (DHOMST), respectively. Finally OMST is converted to aflatoxins B1 and G1, and DHOMST to aflatoxins B2 and G2, via the action of several enzymes including O-methylsterigmatocystin oxidoreductase aflQ, the cytochrome P450 monooxygenase aflU, but also the NADH-dependent flavin oxidoreductase nadA which is specifically required for the synthesis of AFG1. The sequence is that of Norsolorinic acid reductase B from Aspergillus parasiticus (strain ATCC 56775 / NRRL 5862 / SRRC 143 / SU-1).